A 494-amino-acid polypeptide reads, in one-letter code: Inosine-5'-monophosphate dehydrogenase (494 aa).

2 CBS domains span residues 93 to 154 and 158 to 217; these read IIRN…DEKI and MTTN…CKDS. Residues aspartate 251 and 301–303 each bind NAD(+); that span reads GIG. K(+) is bound by residues glycine 303 and glycine 305. Serine 306 is a binding site for IMP. Cysteine 308 is a binding site for K(+). Cysteine 308 functions as the Thioimidate intermediate in the catalytic mechanism. Residues 341 to 343, 364 to 365, and 388 to 392 each bind IMP; these read DGG, GS, and YRGMG. The active-site Proton acceptor is the arginine 406. Residue glutamate 421 participates in IMP binding. 3 residues coordinate K(+): glutamate 475, serine 476, and histidine 477.

It belongs to the IMPDH/GMPR family. In terms of assembly, homotetramer. K(+) serves as cofactor.

It catalyses the reaction IMP + NAD(+) + H2O = XMP + NADH + H(+). It participates in purine metabolism; XMP biosynthesis via de novo pathway; XMP from IMP: step 1/1. Mycophenolic acid (MPA) is a non-competitive inhibitor that prevents formation of the closed enzyme conformation by binding to the same site as the amobile flap. In contrast, mizoribine monophosphate (MZP) is a competitive inhibitor that induces the closed conformation. MPA is a potent inhibitor of mammalian IMPDHs but a poor inhibitor of the bacterial enzymes. MZP is a more potent inhibitor of bacterial IMPDH. In terms of biological role, catalyzes the conversion of inosine 5'-phosphate (IMP) to xanthosine 5'-phosphate (XMP), the first committed and rate-limiting step in the de novo synthesis of guanine nucleotides, and therefore plays an important role in the regulation of cell growth. The protein is Inosine-5'-monophosphate dehydrogenase of Chlorobaculum tepidum (strain ATCC 49652 / DSM 12025 / NBRC 103806 / TLS) (Chlorobium tepidum).